The chain runs to 258 residues: Ubiquinone/menaquinone biosynthesis C-methyltransferase UbiE (258 aa).

Residues 1-21 (MSESRTSADGGMETSYGFREV) are disordered. S-adenosyl-L-methionine-binding positions include Thr81, Asp102, and 130 to 131 (NA).

This sequence belongs to the class I-like SAM-binding methyltransferase superfamily. MenG/UbiE family.

The enzyme catalyses a 2-demethylmenaquinol + S-adenosyl-L-methionine = a menaquinol + S-adenosyl-L-homocysteine + H(+). The catalysed reaction is a 2-methoxy-6-(all-trans-polyprenyl)benzene-1,4-diol + S-adenosyl-L-methionine = a 5-methoxy-2-methyl-3-(all-trans-polyprenyl)benzene-1,4-diol + S-adenosyl-L-homocysteine + H(+). It functions in the pathway quinol/quinone metabolism; menaquinone biosynthesis; menaquinol from 1,4-dihydroxy-2-naphthoate: step 2/2. The protein operates within cofactor biosynthesis; ubiquinone biosynthesis. Methyltransferase required for the conversion of demethylmenaquinol (DMKH2) to menaquinol (MKH2) and the conversion of 2-polyprenyl-6-methoxy-1,4-benzoquinol (DDMQH2) to 2-polyprenyl-3-methyl-6-methoxy-1,4-benzoquinol (DMQH2). The chain is Ubiquinone/menaquinone biosynthesis C-methyltransferase UbiE from Rhizobium johnstonii (strain DSM 114642 / LMG 32736 / 3841) (Rhizobium leguminosarum bv. viciae).